We begin with the raw amino-acid sequence, 694 residues long: GRB2-associated-binding protein 1 (694 aa).

At Ser-2 the chain carries N-acetylserine. The PH domain maps to 5–116 (EVVCSGWLRK…WVRCICDICG (112 aa)). 2 disordered regions span residues 122 to 164 (EDPV…PYQL) and 194 to 231 (PEPTRTHADSAKSTSSETDCNDNVPSHKNPASSQSKHG). Residues 145–157 (APPSTQADSSSAT) are compositionally biased toward polar residues. Residues 194-203 (PEPTRTHADS) are compositionally biased toward basic and acidic residues. Residues 204–231 (AKSTSSETDCNDNVPSHKNPASSQSKHG) show a composition bias toward polar residues. A phosphoserine mark is found at Ser-251, Ser-253, Ser-266, and Ser-304. Positions 323-386 (FPEGTLGQTS…TAGMSPSRSN (64 aa)) are disordered. The segment covering 362 to 386 (IPRTASDTDSSYCIPTAGMSPSRSN) has biased composition (polar residues). Position 387 is a phosphothreonine (Thr-387). Phosphoserine is present on residues Ser-402 and Ser-454. 2 disordered regions span residues 493–532 (AHMGFRSSPKTPPRRPVPVADCEPPPVDRNLKPDRKVKPA) and 544–656 (ELQA…ADER). A Phosphoserine modification is found at Ala-547. A compositionally biased stretch (polar residues) spans 594–611 (PNLSSEDPNLFGSNSLDG). Phosphotyrosine is present on Tyr-627. Thr-638 bears the Phosphothreonine mark. At Ser-651 the chain carries Phosphoserine. Tyr-659 carries the phosphotyrosine modification. Positions 671-694 (KSTREAWTDGRQSTESETPAKSVK) are disordered. Residues 672-684 (STREAWTDGRQST) show a composition bias toward basic and acidic residues. Ser-683 carries the phosphoserine modification. A compositionally biased stretch (polar residues) spans 685-694 (ESETPAKSVK).

It belongs to the GAB family. Identified in a complex containing FRS2, GRB2, GAB1, PIK3R1 and SOS1. Forms a tripartite complex containing GAB1, METTL13 and SPRY2. Within the complex interacts with METTL13. Interacts with GRB2 and with other SH2-containing proteins. Interacts with phosphorylated LAT2. Interacts with PTPRJ. Interacts (phosphorylated) with PTPN11. Interacts with HCK. Post-translationally, phosphorylated in response to FGFR1 activation. Phosphorylated on tyrosine residue(s) by the epidermal growth factor receptor (EGFR) and the insulin receptor (INSR). Tyrosine phosphorylation of GAB1 mediates interaction with several proteins that contain SH2 domains. Phosphorylated on tyrosine residues by HCK upon IL6 signaling.

Its function is as follows. Adapter protein that plays a role in intracellular signaling cascades triggered by activated receptor-type kinases. Plays a role in FGFR1 signaling. Probably involved in signaling by the epidermal growth factor receptor (EGFR) and the insulin receptor (INSR). Involved in the MET/HGF-signaling pathway. The protein is GRB2-associated-binding protein 1 (GAB1) of Homo sapiens (Human).